A 512-amino-acid polypeptide reads, in one-letter code: MGLCSSSSARRDAGTPGGGNGAGNKDNAGRKGIVACGKRTDFGYDKDFEARYALGKLLGHGQFGYTFAAVDRRSSERVAVKRIDKNKMVLPVAVEDVKREVKILKALQGHENVVHFYNAFEDDNYVYIVMELCEGGELLDRILAKKDSRYSEKDAAVVVRQMLKVAAECHLHGLVHRDMKPENFLFKSTKEDSSLKATDFGLSDFIRPGKHFRDIVGSAYYVAPEVLKRKSGPESDVWSIGVITYILLCGRRPFWDKTEDGIFKEVLKNKPDFRRKPWPNITPCAKDFVQKLLVKDPRARLTAAQALSHEWVREGGQASDIPLDISVLHNMRQFVKYSRFKQFALRALASTLNAEELSDLRDQFNAIDVDKNGTISLEELKQALAKDVPWRLKGPRVLEIVEAIDSNTDGLVDFEEFVAATLHVHQLVEHDTEKWKSLSQAAFDKFDVDGDGYITSDELRMQTGLKGSIDPLLEEADIDRDGKISLDEFRRLLKTASMSSRNVQTPRSVHRS.

The interval 1 to 25 (MGLCSSSSARRDAGTPGGGNGAGNK) is disordered. Glycine 2 carries the N-myristoyl glycine lipid modification. A Protein kinase domain is found at 52 to 312 (YALGKLLGHG…AAQALSHEWV (261 aa)). Residues 58-66 (LGHGQFGYT) and lysine 81 contribute to the ATP site. The Proton acceptor role is filled by aspartate 178. Residues 318–348 (ASDIPLDISVLHNMRQFVKYSRFKQFALRAL) are autoinhibitory domain. 4 consecutive EF-hand domains span residues 355 to 390 (EELSDLRDQFNAIDVDKNGTISLEELKQALAKDVPW), 392 to 427 (LKGPRVLEIVEAIDSNTDGLVDFEEFVAATLHVHQL), 434 to 469 (KWKSLSQAAFDKFDVDGDGYITSDELRMQTGLKGSI), and 472 to 499 (LLEEADIDRDGKISLDEFRRLLKTASMS). Residues aspartate 368, aspartate 370, asparagine 372, threonine 374, glutamate 379, aspartate 405, asparagine 407, aspartate 409, glutamate 416, aspartate 447, aspartate 449, aspartate 451, tyrosine 453, glutamate 458, aspartate 477, aspartate 479, aspartate 481, lysine 483, and glutamate 488 each coordinate Ca(2+).

The protein belongs to the protein kinase superfamily. Ser/Thr protein kinase family. CDPK subfamily. Interacts with MPK5. Post-translationally, autophosphorylated. Phosphorylated by MPK5.

The protein resides in the cell membrane. It catalyses the reaction L-seryl-[protein] + ATP = O-phospho-L-seryl-[protein] + ADP + H(+). It carries out the reaction L-threonyl-[protein] + ATP = O-phospho-L-threonyl-[protein] + ADP + H(+). Its activity is regulated as follows. Activated by calcium. Autophosphorylation may play an important role in the regulation of the kinase activity. In terms of biological role, may play a role in signal transduction pathways that involve calcium as a second messenger. Functions upstream of MPK5 in a signaling pathway that represses defense gene expression and negatively regulates resistance to rice blast fungus. Phosphorylates MPK5 at Thr-14 and Thr-32 and activates MPK5 independently of MAP kinase kinase (MKK) phosphorylation. May be involved in arbuscular mycorrhizal presymbiotic phase signaling. Phosphorylates the elicitor-responsive protein ERG1 in vitro. Phosphorylation is calcium-dependent. The chain is Calcium-dependent protein kinase 18 from Oryza sativa subsp. japonica (Rice).